We begin with the raw amino-acid sequence, 266 residues long: MRLIPLKNTTEVGKWAARYIVNRINAFKPTADRPFVLGLPTGGTPMEAYKHLVALYKAGEVSFKNVVTFNMDEYVGLPQEHPESYYTFMHSNFFDHVDIPAENINLLNGNAPDIDEECRRYEEKIKSYGKIHLFMGGVGVDGHIAFNEPASSLASRTRIKTLTEETREANSRFFGGDANLVPKYALTVGVGTLLDAEEVMILVTGRGKAQALQAAVEGSINHMWTISCLQLHAKAIMVCDEPSTMELKVKTVKYFSELEAENIKNL.

The active-site Proton acceptor; for enolization step is Asp-72. The For ring-opening step role is filled by Asp-141. The active-site Proton acceptor; for ring-opening step is the His-143. Glu-148 serves as the catalytic For ring-opening step.

This sequence belongs to the glucosamine/galactosamine-6-phosphate isomerase family. NagB subfamily. Homohexamer.

The enzyme catalyses alpha-D-glucosamine 6-phosphate + H2O = beta-D-fructose 6-phosphate + NH4(+). It functions in the pathway amino-sugar metabolism; N-acetylneuraminate degradation; D-fructose 6-phosphate from N-acetylneuraminate: step 5/5. Allosterically activated by N-acetylglucosamine 6-phosphate (GlcNAc6P). Its function is as follows. Catalyzes the reversible isomerization-deamination of glucosamine 6-phosphate (GlcN6P) to form fructose 6-phosphate (Fru6P) and ammonium ion. The sequence is that of Glucosamine-6-phosphate deaminase from Yersinia enterocolitica serotype O:8 / biotype 1B (strain NCTC 13174 / 8081).